A 277-amino-acid chain; its full sequence is Ribosomal RNA small subunit methyltransferase A (277 aa).

Positions 15, 17, 42, 64, 89, and 109 each coordinate S-adenosyl-L-methionine.

The protein belongs to the class I-like SAM-binding methyltransferase superfamily. rRNA adenine N(6)-methyltransferase family. RsmA subfamily.

The protein localises to the cytoplasm. It carries out the reaction adenosine(1518)/adenosine(1519) in 16S rRNA + 4 S-adenosyl-L-methionine = N(6)-dimethyladenosine(1518)/N(6)-dimethyladenosine(1519) in 16S rRNA + 4 S-adenosyl-L-homocysteine + 4 H(+). In terms of biological role, specifically dimethylates two adjacent adenosines (A1518 and A1519) in the loop of a conserved hairpin near the 3'-end of 16S rRNA in the 30S particle. May play a critical role in biogenesis of 30S subunits. The sequence is that of Ribosomal RNA small subunit methyltransferase A from Synechococcus sp. (strain CC9311).